The following is a 180-amino-acid chain: Acireductone dioxygenase (180 aa).

Residues histidine 97, histidine 99, glutamate 103, and histidine 141 each contribute to the Fe(2+) site. Ni(2+)-binding residues include histidine 97, histidine 99, glutamate 103, and histidine 141.

It belongs to the acireductone dioxygenase (ARD) family. In terms of assembly, monomer. Fe(2+) is required as a cofactor. The cofactor is Ni(2+).

It carries out the reaction 1,2-dihydroxy-5-(methylsulfanyl)pent-1-en-3-one + O2 = 3-(methylsulfanyl)propanoate + CO + formate + 2 H(+). The enzyme catalyses 1,2-dihydroxy-5-(methylsulfanyl)pent-1-en-3-one + O2 = 4-methylsulfanyl-2-oxobutanoate + formate + 2 H(+). Its pathway is amino-acid biosynthesis; L-methionine biosynthesis via salvage pathway; L-methionine from S-methyl-5-thio-alpha-D-ribose 1-phosphate: step 5/6. In terms of biological role, catalyzes 2 different reactions between oxygen and the acireductone 1,2-dihydroxy-3-keto-5-methylthiopentene (DHK-MTPene) depending upon the metal bound in the active site. Fe-containing acireductone dioxygenase (Fe-ARD) produces formate and 2-keto-4-methylthiobutyrate (KMTB), the alpha-ketoacid precursor of methionine in the methionine recycle pathway. Ni-containing acireductone dioxygenase (Ni-ARD) produces methylthiopropionate, carbon monoxide and formate, and does not lie on the methionine recycle pathway. The polypeptide is Acireductone dioxygenase (Klebsiella pneumoniae subsp. pneumoniae (strain ATCC 700721 / MGH 78578)).